The following is a 234-amino-acid chain: Glucosamine-6-phosphate deaminase (234 aa).

The Proton acceptor; for enolization step role is filled by D62. The active-site For ring-opening step is N128. Catalysis depends on H130, which acts as the Proton acceptor; for ring-opening step. E135 serves as the catalytic For ring-opening step.

This sequence belongs to the glucosamine/galactosamine-6-phosphate isomerase family. NagB subfamily.

It carries out the reaction alpha-D-glucosamine 6-phosphate + H2O = beta-D-fructose 6-phosphate + NH4(+). Its pathway is amino-sugar metabolism; N-acetylneuraminate degradation; D-fructose 6-phosphate from N-acetylneuraminate: step 5/5. Functionally, catalyzes the reversible isomerization-deamination of glucosamine 6-phosphate (GlcN6P) to form fructose 6-phosphate (Fru6P) and ammonium ion. The polypeptide is Glucosamine-6-phosphate deaminase (Streptococcus uberis (strain ATCC BAA-854 / 0140J)).